We begin with the raw amino-acid sequence, 375 residues long: G-protein coupled estrogen receptor 1 (375 aa).

Residue Met-1 is modified to N-acetylmethionine. The Extracellular portion of the chain corresponds to Met-1–Ser-62. N-linked (GlcNAc...) asparagine glycans are attached at residues Asn-32 and Asn-44. The helical transmembrane segment at Cys-63–Asn-84 threads the bilayer. Over Ile-85–Leu-96 the chain is Cytoplasmic. A helical transmembrane segment spans residues Tyr-97–Asp-120. The Extracellular segment spans residues Glu-121–Phe-132. The cysteines at positions 130 and 207 are disulfide-linked. Residues Met-133 to Phe-153 form a helical membrane-spanning segment. Residues Asp-154 to Arg-175 are Cytoplasmic-facing. Residues Leu-176–Thr-194 traverse the membrane as a helical segment. Residues Ala-195 to Thr-220 lie on the Extracellular side of the membrane. Residues Leu-221–Leu-236 form a helical membrane-spanning segment. The Cytoplasmic segment spans residues Ile-237 to Arg-259. The chain crosses the membrane as a helical span at residues Met-260–Ser-280. Over Val-281–Gly-306 the chain is Extracellular. The helical transmembrane segment at His-307–Leu-327 threads the bilayer. Topologically, residues Gly-328–Val-375 are cytoplasmic.

Belongs to the G-protein coupled receptor 1 family. Interacts with RAMP3; the interaction confers proper subcellular localization and function in cardioprotection. Interacts with KRT7 and KRT8. Interacts with EGFR; the interaction increases after agonist-induced stimulation in cancer-associated fibroblasts (CAF). Interacts with EGFR and ESR1. Interacts (via C-terminus tail motif) with DLG4 (via N-terminus tandem pair of PDZ domains); the interaction is direct and induces the increase of GPER1 protein levels residing at the plasma membrane surface in a estradiol-independent manner. Homodimer. Heterodimer; heterodimerizes with other G-protein-coupled receptor (GPCRs) like CRHR1, HTR1A and PAQR8. Ubiquitinated; ubiquitination occurs at the plasma membrane and leads to proteasome-mediated degradation. Post-translationally, N-glycosylated. Expressed in brain, heart, spleen, preadipocytes, mature adipocytes and primary hippocampal neurons. Expressed in neurons of the hippocampus, hypothalamic paraventricular nucleus (PVH), supraoptic nucleus (SON) and the median eminence. Expressed in the nucleus ambiguous (at protein level). Expressed in brain, pituitary gland, adrenal medulla, renal pelvis, ovary, endothelial cells, visceral fat tissues and islets of Langerhans.

It localises to the nucleus. The protein resides in the cytoplasm. It is found in the perinuclear region. Its subcellular location is the cytoskeleton. The protein localises to the cell membrane. It localises to the endoplasmic reticulum membrane. The protein resides in the golgi apparatus membrane. It is found in the cell projection. Its subcellular location is the dendrite. The protein localises to the cytoplasmic vesicle membrane. It localises to the early endosome. The protein resides in the recycling endosome. It is found in the golgi apparatus. Its subcellular location is the trans-Golgi network. The protein localises to the dendritic spine membrane. It localises to the axon. The protein resides in the postsynaptic density. It is found in the mitochondrion membrane. In terms of biological role, G-protein coupled estrogen receptor that binds to 17-beta-estradiol (E2) with high affinity, leading to rapid and transient activation of numerous intracellular signaling pathways. Stimulates cAMP production, calcium mobilization and tyrosine kinase Src inducing the release of heparin-bound epidermal growth factor (HB-EGF) and subsequent transactivation of the epidermal growth factor receptor (EGFR), activating downstream signaling pathways such as PI3K/Akt and ERK/MAPK. Mediates pleiotropic functions among others in the cardiovascular, endocrine, reproductive, immune and central nervous systems. Has a role in cardioprotection by reducing cardiac hypertrophy and perivascular fibrosis in a RAMP3-dependent manner. Regulates arterial blood pressure by stimulating vasodilation and reducing vascular smooth muscle and microvascular endothelial cell proliferation. Plays a role in blood glucose homeostasis contributing to the insulin secretion response by pancreatic beta cells. Triggers mitochondrial apoptosis during pachytene spermatocyte differentiation. Stimulates uterine epithelial cell proliferation. Enhances uterine contractility in response to oxytocin. Contributes to thymic atrophy by inducing apoptosis. Attenuates TNF-mediated endothelial expression of leukocyte adhesion molecules. Promotes neuritogenesis in developing hippocampal neurons. Plays a role in acute neuroprotection against NMDA-induced excitotoxic neuronal death. Increases firing activity and intracellular calcium oscillations in luteinizing hormone-releasing hormone (LHRH) neurons. Inhibits early osteoblast proliferation at growth plate during skeletal development. Inhibits mature adipocyte differentiation and lipid accumulation. Involved in the recruitment of beta-arrestin 2 ARRB2 at the plasma membrane in epithelial cells. Also functions as a receptor for aldosterone mediating rapid regulation of vascular contractibility through the PI3K/ERK signaling pathway. Involved in cancer progression regulation. Stimulates cancer-associated fibroblast (CAF) proliferation by a rapid genomic response through the EGFR/ERK transduction pathway. Associated with EGFR, may act as a transcription factor activating growth regulatory genes (c-fos, cyclin D1). Promotes integrin alpha-5/beta-1 and fibronectin (FN) matrix assembly in breast cancer cells. The polypeptide is G-protein coupled estrogen receptor 1 (Gper1) (Mus musculus (Mouse)).